Consider the following 290-residue polypeptide: Acetyl-coenzyme A carboxylase carboxyl transferase subunit beta (290 aa).

The 263-residue stretch at isoleucine 28–aspartate 290 folds into the CoA carboxyltransferase N-terminal domain. Zn(2+) contacts are provided by cysteine 32, cysteine 35, cysteine 51, and cysteine 54. Residues cysteine 32–cysteine 54 form a C4-type zinc finger.

The protein belongs to the AccD/PCCB family. As to quaternary structure, acetyl-CoA carboxylase is a heterohexamer composed of biotin carboxyl carrier protein (AccB), biotin carboxylase (AccC) and two subunits each of ACCase subunit alpha (AccA) and ACCase subunit beta (AccD). The cofactor is Zn(2+).

Its subcellular location is the cytoplasm. It catalyses the reaction N(6)-carboxybiotinyl-L-lysyl-[protein] + acetyl-CoA = N(6)-biotinyl-L-lysyl-[protein] + malonyl-CoA. The protein operates within lipid metabolism; malonyl-CoA biosynthesis; malonyl-CoA from acetyl-CoA: step 1/1. Inhibited by pyrrolidine dione antibiotics moiramide B (CPD1) and CPD2. Its function is as follows. Component of the acetyl coenzyme A carboxylase (ACC) complex. Biotin carboxylase (BC) catalyzes the carboxylation of biotin on its carrier protein (BCCP) and then the CO(2) group is transferred by the transcarboxylase to acetyl-CoA to form malonyl-CoA. This Bacillus subtilis (strain 168) protein is Acetyl-coenzyme A carboxylase carboxyl transferase subunit beta.